An 802-amino-acid polypeptide reads, in one-letter code: Chromosome alignment-maintaining phosphoprotein 1 (802 aa).

Met-1 bears the N-acetylmethionine mark. Over residues 88–105 (SDKWSEQPKEQPSKDTES) the composition is skewed to basic and acidic residues. A disordered region spans residues 88 to 475 (SDKWSEQPKE…PDLWKSSFIM (388 aa)). Ser-108 is subject to Phosphoserine. Residues 135–148 (QKTSPSLCPESQAS) show a composition bias toward polar residues. A compositionally biased stretch (basic and acidic residues) spans 185-203 (ERVDPPCELPELEKPERGP). Phosphoserine is present on residues Ser-204, Ser-207, Ser-234, Ser-237, Ser-243, Ser-252, Ser-254, Ser-265, Ser-272, Ser-276, Ser-298, Ser-309, Ser-334, Ser-345, and Ser-365. The interval 261–479 (ARTASPEPRK…KSSFIMESQK (219 aa)) is mediates interaction with MAD2L2. A compositionally biased stretch (pro residues) spans 332–351 (PMSPGPWKPIPSVSPGPWKP). Low complexity predominate over residues 354–368 (SMSTASWKSSVSSGS). Positions 369-378 (WKTPPTSPES) are enriched in polar residues. Residue Thr-371 is modified to Phosphothreonine. Ser-375, Ser-394, Ser-405, Ser-416, Ser-421, Ser-425, Ser-432, Ser-434, and Ser-441 each carry phosphoserine. The tract at residues 440–580 (VSPDQRKTSP…EIQLEAVDNA (141 aa)) is mediates localization to the spindle and the kinetochore and is required for the attachment of spindle microtubules to the kinetochore. At Thr-447 the chain carries Phosphothreonine. 3 positions are modified to phosphoserine: Ser-448, Ser-451, and Ser-461. Residue Lys-479 is modified to N6-acetyllysine; alternate. Residue Lys-479 forms a Glycyl lysine isopeptide (Lys-Gly) (interchain with G-Cter in SUMO2); alternate linkage. A phosphoserine mark is found at Ser-497, Ser-502, and Ser-532. Lys-555 is covalently cross-linked (Glycyl lysine isopeptide (Lys-Gly) (interchain with G-Cter in SUMO2)). A mediates localization to the chromosome and the spindle and negatively regulates chromosome alignment region spans residues 581–802 (KCDSLAQEGL…LESPLEEQQI (222 aa)). Thr-593 is subject to Phosphothreonine. A Glycyl lysine isopeptide (Lys-Gly) (interchain with G-Cter in SUMO2) cross-link involves residue Lys-596. Ser-603, Ser-605, Ser-617, Ser-622, Ser-641, Ser-642, and Ser-643 each carry phosphoserine. Residues 603–625 (SPSSKKLKKDSQENSDAELSSSE) form a disordered region. A Glycyl lysine isopeptide (Lys-Gly) (interchain with G-Cter in SUMO2) cross-link involves residue Lys-660. Ser-665 is subject to Phosphoserine. Lys-679 is covalently cross-linked (Glycyl lysine isopeptide (Lys-Gly) (interchain with G-Cter in SUMO2)). At Ser-726 the chain carries Phosphoserine. The C2H2-type zinc-finger motif lies at 728 to 750 (YKCTICGKAFLLESLLKNHVAAH).

Interacts with MAD2L2. Interacts with POGZ, CBX1, CBX3 and CBX5. In terms of processing, phosphorylated by CDK1. Mitotic phosphorylation is required for the attachment of spindle microtubules to the kinetochore.

It is found in the nucleus. The protein resides in the chromosome. It localises to the centromere. The protein localises to the kinetochore. Its subcellular location is the cytoplasm. It is found in the cytoskeleton. The protein resides in the spindle. Its function is as follows. Required for proper alignment of chromosomes at metaphase and their accurate segregation during mitosis. Involved in the maintenance of spindle microtubules attachment to the kinetochore during sister chromatid biorientation. May recruit CENPE and CENPF to the kinetochore. This Mus musculus (Mouse) protein is Chromosome alignment-maintaining phosphoprotein 1 (Champ1).